Here is a 204-residue protein sequence, read N- to C-terminus: Small ribosomal subunit protein uS3 (204 aa).

Residues I37–K105 enclose the KH type-2 domain.

Belongs to the universal ribosomal protein uS3 family. Part of the 30S ribosomal subunit. Forms a tight complex with proteins S10 and S14.

Its function is as follows. Binds the lower part of the 30S subunit head. Binds mRNA in the 70S ribosome, positioning it for translation. The protein is Small ribosomal subunit protein uS3 of Wolbachia pipientis wMel.